Consider the following 170-residue polypeptide: MTEQKNTNENDLQNGTSKADDDIRYQEVKPVNNKRSGLIGSAVAILVILAIGGGLYYYTTQQATKLRDPDHLLSDNENPGITCALIPTDVKGVEIGHRHFPLNVPFMNGPTRGKDVFVPIDFIIGGPKMAGQGWRMLVECLSVGRGITLPSNSTGGLKSAAMATGATLEF.

A compositionally biased stretch (polar residues) spans 1–17; that stretch reads MTEQKNTNENDLQNGTS. The segment at 1 to 24 is disordered; it reads MTEQKNTNENDLQNGTSKADDDIR. Residues 37–57 traverse the membrane as a helical segment; that stretch reads GLIGSAVAILVILAIGGGLYY.

The protein resides in the cell membrane. This chain is Protein HemX, found in Proteus mirabilis.